A 396-amino-acid polypeptide reads, in one-letter code: 1-deoxy-D-xylulose 5-phosphate reductoisomerase (396 aa).

Residues Thr-13, Gly-14, Ser-15, Val-16, and Asn-127 each contribute to the NADPH site. Residue Lys-128 coordinates 1-deoxy-D-xylulose 5-phosphate. Glu-129 is a binding site for NADPH. Asp-153 is a Mn(2+) binding site. Residues Ser-154, Glu-155, Ser-184, and His-207 each contribute to the 1-deoxy-D-xylulose 5-phosphate site. Glu-155 lines the Mn(2+) pocket. Gly-213 is an NADPH binding site. Ser-220, Asn-225, Lys-226, and Glu-229 together coordinate 1-deoxy-D-xylulose 5-phosphate. Glu-229 is a binding site for Mn(2+).

Belongs to the DXR family. Mg(2+) is required as a cofactor. It depends on Mn(2+) as a cofactor.

It catalyses the reaction 2-C-methyl-D-erythritol 4-phosphate + NADP(+) = 1-deoxy-D-xylulose 5-phosphate + NADPH + H(+). The protein operates within isoprenoid biosynthesis; isopentenyl diphosphate biosynthesis via DXP pathway; isopentenyl diphosphate from 1-deoxy-D-xylulose 5-phosphate: step 1/6. In terms of biological role, catalyzes the NADPH-dependent rearrangement and reduction of 1-deoxy-D-xylulose-5-phosphate (DXP) to 2-C-methyl-D-erythritol 4-phosphate (MEP). The polypeptide is 1-deoxy-D-xylulose 5-phosphate reductoisomerase (Pseudomonas fluorescens (strain SBW25)).